Here is an 882-residue protein sequence, read N- to C-terminus: Cadherin-1 (882 aa).

Residues 1-23 (MGPWSRSLSALCCCCRCNPWLCR) form the signal peptide. Positions 24 to 154 (EPEPCIPGFG…PHHGLRRQKR (131 aa)) are excised as a propeptide. A disordered region spans residues 117 to 137 (EVSAHHHHHHSHHDSPSGTQT). Cadherin domains follow at residues 154–262 (RDWV…KPQF), 263–375 (TQEV…APRF), 376–486 (NPTT…APIF), 487–595 (VPPQ…GPVP), and 594–702 (VPEP…RPAE). Over 155 to 709 (DWVIPPISCP…PAEAGLQVPA (555 aa)) the chain is Extracellular. The O-linked (Man...) serine glycan is linked to S280. O-linked (Man...) threonine glycans are attached at residues T285, T358, T470, T472, and T509. The N-linked (GlcNAc...) asparagine glycan is linked to N558. T576, T578, and T580 each carry an O-linked (Man...) threonine glycan. N-linked (GlcNAc...) asparagine glycosylation is present at N637. Residues 710-730 (ILGILGGILAFLILILLLLLL) form a helical membrane-spanning segment. The Cytoplasmic segment spans residues 731–882 (VRRRRVVKEP…ADMYGGGEDD (152 aa)). Residues 747–767 (DTRDNVYYYDEEGGGEEDQDF) are disordered. Residues Y753, Y754, and Y755 each carry the phosphotyrosine; by SRC modification. Residues 755 to 767 (YDEEGGGEEDQDF) are compositionally biased toward acidic residues. The tract at residues 758 to 769 (EGGGEEDQDFDL) is required for binding CTNND1 and PSEN1. A phosphoserine mark is found at S770, S793, S838, S840, and S846. A required for binding alpha, beta and gamma catenins region spans residues 811 to 882 (IDENLKAADS…ADMYGGGEDD (72 aa)).

In terms of assembly, homodimer; disulfide-linked. Component of an E-cadherin/ catenin adhesion complex composed of at least E-cadherin/CDH1, beta-catenin/CTNNB1 or gamma-catenin/JUP, and potentially alpha-catenin/CTNNA1; the complex is located to adherens junctions. Found in a complex composed of CDH1, RAP1A and PKP3; PKP3 acts as a scaffold protein within the complex, the complex is required for CDH1 localization to mature desmosome cell junctions. Interacts with the TRPV4 and CTNNB1 complex. Interacts with CTNND1. The stable association of CTNNA1 is controversial as CTNNA1 was shown not to bind to F-actin when assembled in the complex. Alternatively, the CTNNA1-containing complex may be linked to F-actin by other proteins such as LIMA1. Interaction with PSEN1, cleaves CDH1 resulting in the disassociation of cadherin-based adherens junctions (CAJs). Interacts with AJAP1 and DLGAP5. Interacts with TBC1D2. Interacts with CAV1. Interacts with PIP5K1C. Interacts with RAB8B. Interacts with DDR1; this stabilizes CDH1 at the cell surface and inhibits its internalization. Interacts with RAPGEF2. Interacts with KLRG1. Forms a ternary complex composed of ADAM10, CADH1 and EPHA4; within the complex, CADH1 is cleaved by ADAM10 which disrupts adherens junctions. Interacts with SPEF1. Interacts with CTNNB1 and PKP2. Interacts with AMOTL2; the interaction may facilitate binding of radial actin fibers to cell junction complexes. Interacts with DSG3; the interaction is required for CDH1 localization to developing adherens junctions. Post-translationally, during apoptosis or with calcium influx, cleaved by a membrane-bound metalloproteinase (ADAM10), PS1/gamma-secretase and caspase-3. Processing by the metalloproteinase, induced by calcium influx, causes disruption of cell-cell adhesion and the subsequent release of beta-catenin into the cytoplasm. The residual membrane-tethered cleavage product is rapidly degraded via an intracellular proteolytic pathway. Cleavage by caspase-3 releases the cytoplasmic tail resulting in disintegration of the actin microfilament system. The gamma-secretase-mediated cleavage promotes disassembly of adherens junctions. During development of the cochlear organ of Corti, cleavage by ADAM10 at adherens junctions promotes pillar cell separation. In terms of processing, N-glycosylation at Asn-637 is essential for expression, folding and trafficking. Addition of bisecting N-acetylglucosamine by MGAT3 modulates its cell membrane location. Ubiquitinated by a SCF complex containing SKP2, which requires prior phosphorylation by CK1/CSNK1A1. Ubiquitinated by CBLL1/HAKAI, requires prior phosphorylation at Tyr-754. Post-translationally, O-glycosylated. O-manosylated by TMTC1, TMTC2, TMTC3 or TMTC4. Thr-285 and Thr-509 are O-mannosylated by TMTC2 or TMTC4 but not TMTC1 or TMTC3.

It localises to the cell junction. The protein localises to the adherens junction. It is found in the cell membrane. Its subcellular location is the endosome. The protein resides in the golgi apparatus. It localises to the trans-Golgi network. The protein localises to the cytoplasm. It is found in the desmosome. In terms of biological role, cadherins are calcium-dependent cell adhesion proteins. They preferentially interact with themselves in a homophilic manner in connecting cells; cadherins may thus contribute to the sorting of heterogeneous cell types. CDH1 is involved in mechanisms regulating cell-cell adhesions, mobility and proliferation of epithelial cells. Promotes organization of radial actin fiber structure and cellular response to contractile forces, via its interaction with AMOTL2 which facilitates anchoring of radial actin fibers to CDH1 junction complexes at the cell membrane. Plays a role in the early stages of desmosome cell-cell junction formation via facilitating the recruitment of DSG2 and DSP to desmosome plaques. Has a potent invasive suppressor role. It is a ligand for integrin alpha-E/beta-7. Functionally, E-Cad/CTF2 promotes non-amyloidogenic degradation of Abeta precursors. Has a strong inhibitory effect on APP C99 and C83 production. This Bos taurus (Bovine) protein is Cadherin-1 (CDH1).